The chain runs to 274 residues: Nitrogenase iron protein (274 aa).

Gly8 to Ser15 contributes to the ATP binding site. [4Fe-4S] cluster is bound at residue Cys94. At Arg97 the chain carries ADP-ribosylarginine; by dinitrogenase reductase ADP-ribosyltransferase. A [4Fe-4S] cluster-binding site is contributed by Cys129.

This sequence belongs to the NifH/BchL/ChlL family. In terms of assembly, homodimer. It depends on [4Fe-4S] cluster as a cofactor. The reversible ADP-ribosylation of Arg-97 inactivates the nitrogenase reductase and regulates nitrogenase activity.

The enzyme catalyses N2 + 8 reduced [2Fe-2S]-[ferredoxin] + 16 ATP + 16 H2O = H2 + 8 oxidized [2Fe-2S]-[ferredoxin] + 2 NH4(+) + 16 ADP + 16 phosphate + 6 H(+). In terms of biological role, the key enzymatic reactions in nitrogen fixation are catalyzed by the nitrogenase complex, which has 2 components: the iron protein and the molybdenum-iron protein. The protein is Nitrogenase iron protein of Methanocella arvoryzae (strain DSM 22066 / NBRC 105507 / MRE50).